The sequence spans 577 residues: 2-succinyl-5-enolpyruvyl-6-hydroxy-3-cyclohexene-1-carboxylate synthase (577 aa).

The protein belongs to the TPP enzyme family. MenD subfamily. Homodimer. Mg(2+) is required as a cofactor. The cofactor is Mn(2+). It depends on thiamine diphosphate as a cofactor.

It catalyses the reaction isochorismate + 2-oxoglutarate + H(+) = 5-enolpyruvoyl-6-hydroxy-2-succinyl-cyclohex-3-ene-1-carboxylate + CO2. It participates in quinol/quinone metabolism; 1,4-dihydroxy-2-naphthoate biosynthesis; 1,4-dihydroxy-2-naphthoate from chorismate: step 2/7. It functions in the pathway quinol/quinone metabolism; menaquinone biosynthesis. In terms of biological role, catalyzes the thiamine diphosphate-dependent decarboxylation of 2-oxoglutarate and the subsequent addition of the resulting succinic semialdehyde-thiamine pyrophosphate anion to isochorismate to yield 2-succinyl-5-enolpyruvyl-6-hydroxy-3-cyclohexene-1-carboxylate (SEPHCHC). This is 2-succinyl-5-enolpyruvyl-6-hydroxy-3-cyclohexene-1-carboxylate synthase from Porphyromonas gingivalis (strain ATCC BAA-308 / W83).